The chain runs to 472 residues: H(+)/Cl(-) exchange transporter ClcA (472 aa).

The Cytoplasmic portion of the chain corresponds to 1–32; it reads MKAETPSFEAHQFVRVRRGDAVRRLIQRDKTP. The chain crosses the membrane as a helical span at residues 33-69; sequence LAVLLMAAVVGTLAGLVGVAFEKSVNWVQNQRIGALA. Topologically, residues 70-76 are periplasmic; that stretch reads QVADHWY. A helical transmembrane segment spans residues 77 to 100; the sequence is LVWPLAFILSALLAMVGYFLVRRF. The Selectivity filter part_1 signature appears at 106 to 110; sequence GSGIP. Ser-107 contacts chloride. The helical intramembrane region spans 109–116; sequence IPEIEGAL. The Cytoplasmic portion of the chain corresponds to 117 to 123; it reads EELRPVR. 2 helical membrane passes run 124–141 and 148–166; these read WWRVLPVKFIGGMGTLGA and EGPMVQLGGNIGRMVLDIF. The Selectivity filter part_2 motif lies at 146 to 150; it reads GREGP. Over 167-176 the chain is Cytoplasmic; the sequence is RMRSPEARHT. 2 intramembrane regions (helical) span residues 177-189 and 193-201; these read LLATGAASGLSAA and PLAGILFII. The Cytoplasmic portion of the chain corresponds to 202–214; the sequence is EEMRPQFRYNLIS. A helical transmembrane segment spans residues 215-232; sequence IKAVFTGVIMSSIVFRIF. The Periplasmic segment spans residues 233 to 252; the sequence is NGEAAIIEVGKLSNAPVNTL. A helical transmembrane segment spans residues 253–281; it reads WLYLVLGMLFGCFGPLFNFLVLRTQDIFQ. At 282–287 the chain is on the cytoplasmic side; it reads RIHGGN. The helical transmembrane segment at 288 to 309 threads the bilayer; that stretch reads IKTWVLMGGVIGGICGLLGLMQ. Topologically, residues 310 to 329 are periplasmic; it reads PSAVGGGFNLIPIAAAGNFS. A run of 2 helical transmembrane segments spans residues 330-349 and 355-376; these read VGLLLFIFIARVVTTLICFS and GIFAPMLALGTLLGTAFGMAAI. The short motif at 355–359 is the Selectivity filter part_3 element; it reads GIFAP. Residues Ile-356 and Phe-357 each contribute to the chloride site. Residues 377–386 are Periplasmic-facing; it reads PLFPAYHLDA. The helical intramembrane region spans 387–401; the sequence is GTFAIAGMGALLAAS. The note=Loop between two helices intramembrane region spans 402–404; the sequence is VRA. An intramembrane region (helical) is located at residues 405 to 416; sequence PLTGIVLVLEMT. The segment at residues 417–421 is an intramembrane region (note=Loop between two helices); that stretch reads DNYQL. Residues 422–438 traverse the membrane as a helical segment; sequence ILPMIITCLGATLLAQF. The Cytoplasmic segment spans residues 439-472; the sequence is LGGKPLYSTILQRTLAKQEAEQAAKAQQAPRENT. Tyr-445 is a chloride binding site.

Belongs to the chloride channel (TC 2.A.49) family. ClcA subfamily. In terms of assembly, homodimer.

The protein localises to the cell inner membrane. It catalyses the reaction 2 chloride(in) + H(+)(out) = 2 chloride(out) + H(+)(in). Functionally, proton-coupled chloride transporter. Functions as antiport system and exchanges two chloride ions for 1 proton. Probably acts as an electrical shunt for an outwardly-directed proton pump that is linked to amino acid decarboxylation, as part of the extreme acid resistance (XAR) response. The protein is H(+)/Cl(-) exchange transporter ClcA of Klebsiella pneumoniae (strain 342).